Consider the following 601-residue polypeptide: Elongation factor 4 (601 aa).

In terms of domain architecture, tr-type G spans 7–189 (KNIRNFSIVA…AIVTRLPPPQ (183 aa)). GTP contacts are provided by residues 19 to 24 (DHGKST) and 136 to 139 (NKID).

This sequence belongs to the TRAFAC class translation factor GTPase superfamily. Classic translation factor GTPase family. LepA subfamily.

It is found in the cell inner membrane. It catalyses the reaction GTP + H2O = GDP + phosphate + H(+). Required for accurate and efficient protein synthesis under certain stress conditions. May act as a fidelity factor of the translation reaction, by catalyzing a one-codon backward translocation of tRNAs on improperly translocated ribosomes. Back-translocation proceeds from a post-translocation (POST) complex to a pre-translocation (PRE) complex, thus giving elongation factor G a second chance to translocate the tRNAs correctly. Binds to ribosomes in a GTP-dependent manner. In Methylocella silvestris (strain DSM 15510 / CIP 108128 / LMG 27833 / NCIMB 13906 / BL2), this protein is Elongation factor 4.